Here is a 33-residue protein sequence, read N- to C-terminus: Putative makorin-5 (33 aa).

In Homo sapiens (Human), this protein is Putative makorin-5 (MKRN9P).